The sequence spans 111 residues: Large ribosomal subunit protein uL22 (111 aa).

It belongs to the universal ribosomal protein uL22 family. In terms of assembly, part of the 50S ribosomal subunit.

This protein binds specifically to 23S rRNA; its binding is stimulated by other ribosomal proteins, e.g. L4, L17, and L20. It is important during the early stages of 50S assembly. It makes multiple contacts with different domains of the 23S rRNA in the assembled 50S subunit and ribosome. Its function is as follows. The globular domain of the protein is located near the polypeptide exit tunnel on the outside of the subunit, while an extended beta-hairpin is found that lines the wall of the exit tunnel in the center of the 70S ribosome. This is Large ribosomal subunit protein uL22 from Chlamydia trachomatis serovar A (strain ATCC VR-571B / DSM 19440 / HAR-13).